Reading from the N-terminus, the 606-residue chain is Aspartate--tRNA(Asp/Asn) ligase (606 aa).

E177 serves as a coordination point for L-aspartate. The interval 201-204 is aspartate; sequence QIFK. R223 is a binding site for L-aspartate. ATP is bound by residues 223-225 and Q232; that span reads RDE. H461 provides a ligand contact to L-aspartate. Residue E499 participates in ATP binding. Residue R506 coordinates L-aspartate. 551–554 contributes to the ATP binding site; sequence GLDR.

The protein belongs to the class-II aminoacyl-tRNA synthetase family. Type 1 subfamily. As to quaternary structure, homodimer.

Its subcellular location is the cytoplasm. The enzyme catalyses tRNA(Asx) + L-aspartate + ATP = L-aspartyl-tRNA(Asx) + AMP + diphosphate. Its function is as follows. Aspartyl-tRNA synthetase with relaxed tRNA specificity since it is able to aspartylate not only its cognate tRNA(Asp) but also tRNA(Asn). Reaction proceeds in two steps: L-aspartate is first activated by ATP to form Asp-AMP and then transferred to the acceptor end of tRNA(Asp/Asn). This Prochlorococcus marinus (strain MIT 9211) protein is Aspartate--tRNA(Asp/Asn) ligase.